The following is a 128-amino-acid chain: DNA-directed RNA polymerase subunit omega (128 aa).

The protein belongs to the RNA polymerase subunit omega family. In terms of assembly, the RNAP catalytic core consists of 2 alpha, 1 beta, 1 beta' and 1 omega subunit. When a sigma factor is associated with the core the holoenzyme is formed, which can initiate transcription.

The catalysed reaction is RNA(n) + a ribonucleoside 5'-triphosphate = RNA(n+1) + diphosphate. Its function is as follows. Promotes RNA polymerase assembly. Latches the N- and C-terminal regions of the beta' subunit thereby facilitating its interaction with the beta and alpha subunits. The protein is DNA-directed RNA polymerase subunit omega of Neorickettsia sennetsu (strain ATCC VR-367 / Miyayama) (Ehrlichia sennetsu).